The following is a 504-amino-acid chain: Glucose-6-phosphate isomerase (504 aa).

The Proton donor role is filled by Glu333. Residues His364 and Lys473 contribute to the active site.

This sequence belongs to the GPI family.

Its subcellular location is the cytoplasm. It catalyses the reaction alpha-D-glucose 6-phosphate = beta-D-fructose 6-phosphate. It functions in the pathway carbohydrate biosynthesis; gluconeogenesis. Its pathway is carbohydrate degradation; glycolysis; D-glyceraldehyde 3-phosphate and glycerone phosphate from D-glucose: step 2/4. Catalyzes the reversible isomerization of glucose-6-phosphate to fructose-6-phosphate. This is Glucose-6-phosphate isomerase from Xanthomonas campestris pv. campestris (strain B100).